The following is a 904-amino-acid chain: Alpha-actinin-4 (904 aa).

Positions 1-27 (MVDYHSAGQPYPYGGNGPGPNGDYMAQ) are disordered. The actin-binding stretch occupies residues 1-259 (MVDYHSAGQP…IMTYVSSFYH (259 aa)). Calponin-homology (CH) domains follow at residues 43–147 (KQQR…LRFA) and 156–262 (TSAK…HAFS). Spectrin repeat units lie at residues 286-396 (HLME…WLLN), 406-511 (HLAE…ALEK), 521-632 (ELHL…ALQD), and 642-745 (RLRR…EVEN). EF-hand domains are found at residues 758–793 (EQMQEFRASFNHFDKDHCGALGPEEFKACLISLGYD) and 799–834 (QGDAEFNRIMSLVDPNGSGSVTFQAFIDFMSRETTD). Positions 771, 773, 782, 812, 814, 816, and 818 each coordinate Ca(2+).

It belongs to the alpha-actinin family. In terms of assembly, homodimer; antiparallel. Component of the CART complex. May interact with nuclear receptors.

It localises to the nucleus. The protein localises to the cytoplasm. Its subcellular location is the cell junction. It is found in the perinuclear region. F-actin cross-linking protein which is thought to anchor actin to a variety of intracellular structures. This is a bundling protein. Probably involved in vesicular trafficking via its association with the CART complex. Involved in tight junction assembly in epithelial cells. May also function as a transcriptional coactivator, stimulating transcription mediated by nuclear hormone receptors. In Gallus gallus (Chicken), this protein is Alpha-actinin-4.